The chain runs to 152 residues: MVKAVAVLSNSNEVSGTINFSQEGNGPTTVTGTLAGLKPGLHGFHIHALGDTTNGCISTGPHFNPNGKEHGAPEDETRHAGDLGNINVGDDGTVSFTITDNHIPLTGTNSIIGRAVVVHADPDDLGKGGHELSKTTGNAGGRVACGIIGLQG.

3 residues coordinate Cu cation: histidine 45, histidine 47, and histidine 62. The cysteines at positions 56 and 145 are disulfide-linked. Residues histidine 62, histidine 70, histidine 79, and aspartate 82 each contribute to the Zn(2+) site. A Cu cation-binding site is contributed by histidine 119.

This sequence belongs to the Cu-Zn superoxide dismutase family. Homodimer. Requires Cu cation as cofactor. Zn(2+) is required as a cofactor.

The protein localises to the cytoplasm. The enzyme catalyses 2 superoxide + 2 H(+) = H2O2 + O2. Destroys radicals which are normally produced within the cells and which are toxic to biological systems. The chain is Superoxide dismutase [Cu-Zn] (SODCC) from Pisum sativum (Garden pea).